The following is a 166-amino-acid chain: MTVPLEAEGLIGKHYRQLDHFQVGREKIREFAIAVKDDHPTHYNETAAFEAGYPALVAPLTFLAIAGRRVQLEIFTKFNIPINVARVFHRDQKFRFYRTILAQDKLYFDTYLDSVIESHGTVIAEVRSEVTDTEGKAVVTSIVTMLGELARQDATAEETVAAIASI.

One can recognise a MaoC-like domain in the interval 10-131 (LIGKHYRQLD…VIAEVRSEVT (122 aa)).

Belongs to the UPF0336 family.

The chain is UPF0336 protein ML2425 from Mycobacterium leprae (strain TN).